A 180-amino-acid polypeptide reads, in one-letter code: Iron sulfur cluster assembly protein 1, mitochondrial (180 aa).

The protein belongs to the NifU family. As to quaternary structure, component of the core Fe-S cluster (ISC) assembly machinery. Requires [2Fe-2S] cluster as cofactor.

Its subcellular location is the mitochondrion matrix. The protein operates within cofactor biosynthesis; iron-sulfur cluster biosynthesis. Scaffold protein for the de novo synthesis of iron-sulfur (Fe-S) clusters within mitochondria, which is required for maturation of both mitochondrial and cytoplasmic [2Fe-2S] and [4Fe-4S] proteins. First, a [2Fe-2S] cluster is transiently assembled on the scaffold protein ISU1. In a second step, the cluster is released from ISU1, transferred to a glutaredoxin, followed by the formation of mitochondrial [2Fe-2S] proteins, the synthesis of [4Fe-4S] clusters and their target-specific insertion into the recipient apoproteins. Cluster assembly on ISU1 depends on the function of the cysteine desulfurase complex NFS1-ISD11, which serves as the sulfur donor for cluster synthesis, the iron-binding protein frataxin as the putative iron donor, and the electron transfer chain comprised of ferredoxin reductase and ferredoxin, which receive their electrons from NADH. The sequence is that of Iron sulfur cluster assembly protein 1, mitochondrial (ISU1) from Kluyveromyces lactis (strain ATCC 8585 / CBS 2359 / DSM 70799 / NBRC 1267 / NRRL Y-1140 / WM37) (Yeast).